The primary structure comprises 1336 residues: MTLPFSWITNDVSQCIDLTQDEHICSLSPVTDTEENMSAFKKSLFGKYDCSLNSEDQCLIVENGSSNFVTSKEAQKEAMKADSDICPPQQMAFNLFNETVVQKDMLNKEKFSHSASSNISNKDDAQYGIVTPVTEIPKQFRTVFKEFPYFNYIQSKALEHLLYSDRNFVLCAPTGSGKTVIFELAIIRLLMQVPMPWTNVKIVYMAPIKALCGQRYDDWKAKFGPVGLNCKELTGDTEMDDLFEIQHAHIIMTTPEKWDSMTRKWKDNTLVQLVRLFLIDEVHILKEENRGATLEVVVSRMKTIYSLSHLSEDRKAFIPMRFVAVSATIPNVEDIADWLSDENSPGVCMKMDESSRPVKLRKVVLGFPCSTKQSEFKFDLTLNYKIANIIQTYSDGRPTLVFCSTRKGVQQAASILTKDAKFVMSIEHKQRLQKCANSIKDSKLRDVLQYGVGYHHAGVDISDRKVIENSFLIGDLPVLFTTSTLAMGVNLPAHLVIVKSTMHYVSGMFQEYSETDILQMIGRAGRPQFDSTATAVIMTRLSTKEKYVHMLDGADTIESSLHKHLVEHLNAEIALHTITDVKVALEWIRSTFLYIRALKNPAYYGFSEGLDKIGIEAKLQELCLKNLNDLSSLGLIKMDEEINFKPTETGKLMALYYIAFNTAKLFHTIRGTETLAELVSLISSCSEFSDVQLRANERRVLNTLNKDKNRVTIRYPMEGKIKTKEMKVNCLIQAHLGCILVQDFSLTQDISKIFRHGTRLAKCLSEFLALQENKFSAFLNALILTKCFKSKLWENSSHISKQLEKIGVTLANAMVNAGLTTFKKIEDTNARELELIVNRHPPFGNQIKESVAHLPKYEIKFQQLAKYRATTAEVVLTVLLTNFKQLQKKRTAPDSHFVMLVIGDDDNQAIFKQKIMDSSLFKTGSWTRKIEIKRASKSTNVCLNLISSEYVGLDIQQSFNICYLGSDSFNADLVTQHKSENIFSQEIYKTSTKTKDIADTNWSMRQTAIKCATRECNHNCKNKDACGHECCKVGVSEKAEMKTNFYSYLNDLRTRNSVSSATPVKRLKMQMEAETRNVNLQNFVFTPKPSIRSPCLKIPENILLQAESSVLTNKYKASHQEETCCKYEIKGCGEKQTKGMPKKTCERRNLTDSDKCNSSSSENAAYVTFDLGNDIWDDFDDDNLLDASNISSLTDQHTSEFTDVSFSKNQPVSKSSLSAGHHEEARYNAMSINKDSYRYLNAKSEVFSQENTQCIDVVPSNQKLHGKMFSENTIKHMFTLQEETNYPVTSKMDSPHNGCWSSNIFFKTPENKTQERGCYHQEDETNAFIGIFNGIF.

A Helicase ATP-binding domain is found at 159-347 (EHLLYSDRNF…WLSDENSPGV (189 aa)). 172–179 (APTGSGKT) is an ATP binding site. The DEAH box motif lies at 280–283 (DEVH). A Helicase C-terminal domain is found at 388-589 (NIIQTYSDGR…DVKVALEWIR (202 aa)). The SEC63 domain maps to 646–961 (PTETGKLMAL…GLDIQQSFNI (316 aa)). The segment at 1016-1031 (CNHNCKNKDACGHECC) adopts a C4-type zinc-finger fold.

The protein belongs to the helicase family. SKI2 subfamily. It depends on Zn(2+) as a cofactor.

It catalyses the reaction Couples ATP hydrolysis with the unwinding of duplex DNA by translocating in the 3'-5' direction.. The catalysed reaction is ATP + H2O = ADP + phosphate + H(+). Its function is as follows. Required for crossover formation and complete synapsis of homologous chromosomes during meiosis. In Xenopus tropicalis (Western clawed frog), this protein is Probable ATP-dependent DNA helicase HFM1 (hfm1).